We begin with the raw amino-acid sequence, 379 residues long: Eukaryotic translation initiation factor 3 subunit M (379 aa).

Residues 179–341 form the PCI domain; sequence RSEEASKVMI…RKVIISSVAQ (163 aa).

Belongs to the eIF-3 subunit M family. In terms of assembly, component of the eukaryotic translation initiation factor 3 (eIF-3) complex.

The protein resides in the cytoplasm. In terms of biological role, component of the eukaryotic translation initiation factor 3 (eIF-3) complex, which is involved in protein synthesis of a specialized repertoire of mRNAs and, together with other initiation factors, stimulates binding of mRNA and methionyl-tRNAi to the 40S ribosome. The eIF-3 complex specifically targets and initiates translation of a subset of mRNAs involved in cell proliferation. The sequence is that of Eukaryotic translation initiation factor 3 subunit M from Nematostella vectensis (Starlet sea anemone).